The chain runs to 79 residues: ATP synthase subunit c (79 aa).

2 helical membrane passes run 11–31 and 53–73; these read MAAALMMGLAAIGAAIGIGIL and FFIVMGLVDAIPMIAVGLGLY.

This sequence belongs to the ATPase C chain family. As to quaternary structure, F-type ATPases have 2 components, F(1) - the catalytic core - and F(0) - the membrane proton channel. F(1) has five subunits: alpha(3), beta(3), gamma(1), delta(1), epsilon(1). F(0) has three main subunits: a(1), b(2) and c(10-14). The alpha and beta chains form an alternating ring which encloses part of the gamma chain. F(1) is attached to F(0) by a central stalk formed by the gamma and epsilon chains, while a peripheral stalk is formed by the delta and b chains.

The protein resides in the cell inner membrane. Its function is as follows. F(1)F(0) ATP synthase produces ATP from ADP in the presence of a proton or sodium gradient. F-type ATPases consist of two structural domains, F(1) containing the extramembraneous catalytic core and F(0) containing the membrane proton channel, linked together by a central stalk and a peripheral stalk. During catalysis, ATP synthesis in the catalytic domain of F(1) is coupled via a rotary mechanism of the central stalk subunits to proton translocation. In terms of biological role, key component of the F(0) channel; it plays a direct role in translocation across the membrane. A homomeric c-ring of between 10-14 subunits forms the central stalk rotor element with the F(1) delta and epsilon subunits. The protein is ATP synthase subunit c of Pectobacterium atrosepticum (strain SCRI 1043 / ATCC BAA-672) (Erwinia carotovora subsp. atroseptica).